Reading from the N-terminus, the 555-residue chain is Protein tyrosine phosphatase-like protein egg-3 (555 aa).

Short sequence motifs (D-box) lie at residues 96-99 (RILL) and 130-133 (RDRL). One can recognise a Tyrosine-protein phosphatase domain in the interval 207-514 (FVQEFNRLDR…LFIYRVILRW (308 aa)). Residues 253–256 (RVKL) carry the RXXL motif; required for cortical localization motif. The RXXL motif motif lies at 266–269 (RNEL). 2 consecutive short sequence motifs (RXXL motif; required for cortical localization) follow at residues 509 to 512 (RVIL) and 525 to 528 (RAAL).

Belongs to the protein-tyrosine phosphatase family. Part of a complex, consisting of pseudophosphatases egg-3, egg-4, egg-5 and kinase mbk-2; this complex is required for the oocyte-to-zygote transition. Interacts (via tyrosine-protein phosphatase domain) with kinase mbk-2 (via N-terminus); the interaction does not affect mbk-2 kinase activity, is enhanced by mbk-2 tyrosine phosphorylation status and requires prior binding of mbk-2 to egg-4 and egg-5. Interacts with egg-4.

It localises to the cytoplasm. It is found in the cell cortex. Its function is as follows. Probable pseudophosphatase required for the oocyte-to-zygote transition during which it regulates the polarized dispersal of the cortical actin cytoskeleton, the synthesis of the eggshell chitin layer and the formation of the polar bodies after meiosis I and II. Acts as a scaffold to tether kinase mbk-2 and pseudophosphatases egg-4 and egg-5 to the oocyte cortex and thus restricts mbk-2 activity to the cortex during meiosis I. Regulates mbk-2 localization to cytoplasmic foci during meiosis II. Also required for chitin synthase chs-1 localization to the cell cortex of unfertilized oocytes and to cytoplasmic foci in the fertilized embryo. The polypeptide is Protein tyrosine phosphatase-like protein egg-3 (Caenorhabditis elegans).